Consider the following 335-residue polypeptide: 2-acylglycerol O-acyltransferase 1 (335 aa).

2 helical membrane passes run 24–44 (WVFS…CLVL) and 47–67 (VWLL…TPQA). N-linked (GlcNAc...) asparagine glycosylation is found at N125 and N180.

This sequence belongs to the diacylglycerol acyltransferase family.

It localises to the endoplasmic reticulum membrane. The catalysed reaction is a 2-acylglycerol + an acyl-CoA = a 1,2-diacylglycerol + CoA. The enzyme catalyses a 2-acylglycerol + an acyl-CoA = a 1,2-diacyl-sn-glycerol + CoA. It catalyses the reaction a 2-acylglycerol + an acyl-CoA = a 2,3-diacyl-sn-glycerol + CoA. It carries out the reaction a 1-acylglycerol + an acyl-CoA = a 1,2-diacylglycerol + CoA. The catalysed reaction is a 1-acylglycerol + an acyl-CoA = a 1,3-diacylglycerol + CoA. The enzyme catalyses a 1-acyl-sn-glycerol + an acyl-CoA = a 1,3-diacyl-sn-glycerol + CoA. It catalyses the reaction a 3-acyl-sn-glycerol + an acyl-CoA = a 1,3-diacyl-sn-glycerol + CoA. The protein operates within glycerolipid metabolism; triacylglycerol biosynthesis. In terms of biological role, involved in glycerolipid synthesis and lipid metabolism. Catalyzes the formation of diacylglycerol, the precursor of triacylglycerol, by transferring the acyl chain of a fatty acyl-CoA to a monoacylglycerol, mainly at the sn-1 or sn-3 positions. It uses both sn-2-monoacylglycerol (2-acylglycerol) and sn-1-monoacylglycerol (1-acyl-sn-glycerol) equally well as substrates, and uses sn-3-monoacylglycerol (3-acyl-sn-glycerol) with lower efficiency. This Xenopus laevis (African clawed frog) protein is 2-acylglycerol O-acyltransferase 1 (mogat1).